The following is an 821-amino-acid chain: DNA ligase (821 aa).

NAD(+) is bound by residues 33-37 (DVDYD), 82-83 (SL), and E113. K115 (N6-AMP-lysine intermediate) is an active-site residue. R136, E173, K290, and K314 together coordinate NAD(+). The Zn(2+) site is built by C408, C411, C426, and C432. The BRCT domain occupies 741–821 (IVAGPLDGQT…RLLAYLAEHE (81 aa)).

The protein belongs to the NAD-dependent DNA ligase family. LigA subfamily. The cofactor is Mg(2+). Requires Mn(2+) as cofactor.

It carries out the reaction NAD(+) + (deoxyribonucleotide)n-3'-hydroxyl + 5'-phospho-(deoxyribonucleotide)m = (deoxyribonucleotide)n+m + AMP + beta-nicotinamide D-nucleotide.. DNA ligase that catalyzes the formation of phosphodiester linkages between 5'-phosphoryl and 3'-hydroxyl groups in double-stranded DNA using NAD as a coenzyme and as the energy source for the reaction. It is essential for DNA replication and repair of damaged DNA. The protein is DNA ligase of Stenotrophomonas maltophilia (strain K279a).